Reading from the N-terminus, the 273-residue chain is Embryonic polyadenylate-binding protein 2 (273 aa).

A disordered region spans residues 22 to 57 (SSDPEAQGWGAWGRTEKTSLVPRAGSRAGSDKEAEE). The RRM domain maps to 143 to 220 (RSVFVGNVDY…RVIKVLPKRT (78 aa)).

The protein localises to the cytoplasm. In terms of biological role, binds the poly(A) tail of mRNA. The protein is Embryonic polyadenylate-binding protein 2 (Pabpn1l) of Mus musculus (Mouse).